The chain runs to 233 residues: Orotidine 5'-phosphate decarboxylase (233 aa).

Substrate contacts are provided by residues aspartate 9, lysine 31, 58–67 (DLKLHDIPNT), threonine 120, arginine 182, glutamine 191, glycine 211, and arginine 212. Lysine 60 acts as the Proton donor in catalysis.

It belongs to the OMP decarboxylase family. Type 1 subfamily. Homodimer.

It catalyses the reaction orotidine 5'-phosphate + H(+) = UMP + CO2. It functions in the pathway pyrimidine metabolism; UMP biosynthesis via de novo pathway; UMP from orotate: step 2/2. Its function is as follows. Catalyzes the decarboxylation of orotidine 5'-monophosphate (OMP) to uridine 5'-monophosphate (UMP). In Listeria monocytogenes serovar 1/2a (strain ATCC BAA-679 / EGD-e), this protein is Orotidine 5'-phosphate decarboxylase.